A 559-amino-acid polypeptide reads, in one-letter code: 2-succinyl-5-enolpyruvyl-6-hydroxy-3-cyclohexene-1-carboxylate synthase (559 aa).

Belongs to the TPP enzyme family. MenD subfamily. As to quaternary structure, homodimer. It depends on Mg(2+) as a cofactor. Mn(2+) is required as a cofactor. Requires thiamine diphosphate as cofactor.

The enzyme catalyses isochorismate + 2-oxoglutarate + H(+) = 5-enolpyruvoyl-6-hydroxy-2-succinyl-cyclohex-3-ene-1-carboxylate + CO2. The protein operates within quinol/quinone metabolism; 1,4-dihydroxy-2-naphthoate biosynthesis; 1,4-dihydroxy-2-naphthoate from chorismate: step 2/7. It participates in quinol/quinone metabolism; menaquinone biosynthesis. In terms of biological role, catalyzes the thiamine diphosphate-dependent decarboxylation of 2-oxoglutarate and the subsequent addition of the resulting succinic semialdehyde-thiamine pyrophosphate anion to isochorismate to yield 2-succinyl-5-enolpyruvyl-6-hydroxy-3-cyclohexene-1-carboxylate (SEPHCHC). This chain is 2-succinyl-5-enolpyruvyl-6-hydroxy-3-cyclohexene-1-carboxylate synthase, found in Edwardsiella ictaluri (strain 93-146).